The chain runs to 317 residues: Acetyl-coenzyme A carboxylase carboxyl transferase subunit alpha (317 aa).

The 255-residue stretch at 39–293 (RLETKAREAL…GDAIADALSQ (255 aa)) folds into the CoA carboxyltransferase C-terminal domain.

This sequence belongs to the AccA family. As to quaternary structure, acetyl-CoA carboxylase is a heterohexamer composed of biotin carboxyl carrier protein (AccB), biotin carboxylase (AccC) and two subunits each of ACCase subunit alpha (AccA) and ACCase subunit beta (AccD).

It localises to the cytoplasm. The catalysed reaction is N(6)-carboxybiotinyl-L-lysyl-[protein] + acetyl-CoA = N(6)-biotinyl-L-lysyl-[protein] + malonyl-CoA. It participates in lipid metabolism; malonyl-CoA biosynthesis; malonyl-CoA from acetyl-CoA: step 1/1. Component of the acetyl coenzyme A carboxylase (ACC) complex. First, biotin carboxylase catalyzes the carboxylation of biotin on its carrier protein (BCCP) and then the CO(2) group is transferred by the carboxyltransferase to acetyl-CoA to form malonyl-CoA. The protein is Acetyl-coenzyme A carboxylase carboxyl transferase subunit alpha of Xanthobacter autotrophicus (strain ATCC BAA-1158 / Py2).